A 610-amino-acid chain; its full sequence is Cytosolic 5'-nucleotidase 1B (610 aa).

Disordered regions lie at residues 1–34 (MSQT…DKTG) and 101–277 (GSQE…DEDD). Residues 9–34 (KKNEPGMRSSKESLEAEKRKESDKTG) show a composition bias toward basic and acidic residues. Positions 119–132 (SQWSRISRSPSTKA) are enriched in polar residues. The segment covering 148-166 (PSSSTSSRTPSTSPSLHDS) has biased composition (low complexity). A compositionally biased stretch (pro residues) spans 167–183 (SPPPLSGQPSLQPPASP). The span at 236-265 (SRTSPTEWKSSSQRRGIYPASTQLDRNSLS) shows a compositional bias: polar residues. The Nucleophile role is filled by Asp467.

It belongs to the 5'-nucleotidase type 3 family. Mg(2+) is required as a cofactor. Highly expressed in testis, placenta and pancreas. Detected at lower levels in heart, kidney, liver and lung.

It is found in the cytoplasm. The catalysed reaction is a ribonucleoside 5'-phosphate + H2O = a ribonucleoside + phosphate. It catalyses the reaction AMP + H2O = adenosine + phosphate. Activated by ADP. Its function is as follows. Catalyzes the hydrolysis of nucleotide monophosphates, releasing inorganic phosphate and the corresponding nucleoside, AMP is the major substrate. This is Cytosolic 5'-nucleotidase 1B (NT5C1B) from Homo sapiens (Human).